Consider the following 154-residue polypeptide: Nascent polypeptide-associated complex subunit beta (154 aa).

In terms of domain architecture, NAC-A/B spans 33-98 (EQDDTKLIEA…PQEKNVTQLI (66 aa)). A disordered region spans residues 125-154 (APTELNAGAPAGGDEGIPDLIDGEKFDEVE).

It belongs to the NAC-beta family. In terms of assembly, part of the nascent polypeptide-associated complex (NAC), consisting of EGD2 and EGD1. NAC associates with ribosomes via EGD1.

Its subcellular location is the cytoplasm. It is found in the nucleus. Its function is as follows. Component of the nascent polypeptide-associated complex (NAC), a dynamic component of the ribosomal exit tunnel, protecting the emerging polypeptides from interaction with other cytoplasmic proteins to ensure appropriate nascent protein targeting. The NAC complex also promotes mitochondrial protein import by enhancing productive ribosome interactions with the outer mitochondrial membrane and blocks the inappropriate interaction of ribosomes translating non-secretory nascent polypeptides with translocation sites in the membrane of the endoplasmic reticulum. EGD1 may act as a transcription factor that exert a negative effect on the expression of several genes that are transcribed by RNA polymerase II. The protein is Nascent polypeptide-associated complex subunit beta (EGD1) of Scheffersomyces stipitis (strain ATCC 58785 / CBS 6054 / NBRC 10063 / NRRL Y-11545) (Yeast).